The sequence spans 1141 residues: Myosin-binding protein C, fast-type (1141 aa).

The tract at residues 1-62 (MPEAKPAAKK…VFLKKPDSVS (62 aa)) is disordered. Positions 13-39 (KGKDAPKGAPKEAPPKEAPAEAPKEAP) are enriched in basic and acidic residues. Ig-like C2-type domains lie at 50–153 (PTGV…NIDV), 255–344 (SAAF…VKEP), 345–437 (PVLI…VEEK), 438–538 (QLEV…KQEP), and 539–638 (PKIH…VVDV). Fibronectin type-III domains lie at 641–737 (PPEA…IAPT) and 739–834 (EPLH…IREI). An Ig-like C2-type 6 domain is found at 838 to 932 (PKIRLPRHLR…ATIRIRVVEK (95 aa)). Positions 935 to 1030 (PPINVMVKEV…SKNTARILKT (96 aa)) constitute a Fibronectin type-III 3 domain. Residues 1048 to 1141 (PKFLTPLIDR…ECKLEVRVPQ (94 aa)) form the Ig-like C2-type 7 domain.

It belongs to the immunoglobulin superfamily. MyBP family.

Its function is as follows. Thick filament-associated protein located in the crossbridge region of vertebrate striated muscle a bands. In vitro it binds MHC, F-actin and native thin filaments, and modifies the activity of actin-activated myosin ATPase. It may modulate muscle contraction or may play a more structural role. This Homo sapiens (Human) protein is Myosin-binding protein C, fast-type (MYBPC2).